Consider the following 425-residue polypeptide: UDP-N-acetylglucosamine 1-carboxyvinyltransferase (425 aa).

A phosphoenolpyruvate-binding site is contributed by 22 to 23 (KN). R91 provides a ligand contact to UDP-N-acetyl-alpha-D-glucosamine. C115 (proton donor) is an active-site residue. Residue C115 is modified to 2-(S-cysteinyl)pyruvic acid O-phosphothioketal. Residues 120–124 (RPVDL), D309, and I331 contribute to the UDP-N-acetyl-alpha-D-glucosamine site.

It belongs to the EPSP synthase family. MurA subfamily.

The protein resides in the cytoplasm. The enzyme catalyses phosphoenolpyruvate + UDP-N-acetyl-alpha-D-glucosamine = UDP-N-acetyl-3-O-(1-carboxyvinyl)-alpha-D-glucosamine + phosphate. It functions in the pathway cell wall biogenesis; peptidoglycan biosynthesis. Cell wall formation. Adds enolpyruvyl to UDP-N-acetylglucosamine. The protein is UDP-N-acetylglucosamine 1-carboxyvinyltransferase of Akkermansia muciniphila (strain ATCC BAA-835 / DSM 22959 / JCM 33894 / BCRC 81048 / CCUG 64013 / CIP 107961 / Muc).